Here is a 382-residue protein sequence, read N- to C-terminus: Myb-like transcription factor (382 aa).

3 Myb-like domains span residues 1-57, 58-108, and 109-160; these read MPRS…RWSK, ITGA…QHCL, and DPSL…ITLF. Acidic residues predominate over residues 194–210; that stretch reads MSMDASEDGDDAEDDQT. Positions 194–240 are disordered; the sequence is MSMDASEDGDDAEDDQTPDSYTSISTSSFDDILGGSSSSPSAADTMT. A compositionally biased stretch (polar residues) spans 211–240; the sequence is PDSYTSISTSSFDDILGGSSSSPSAADTMT.

It localises to the nucleus. Functionally, transcription factor; part of the gene cluster that mediates the biosynthesis of 1233A, a natural compound known as an inhibitor of HMG-CoA synthase in the mevalonate pathway and with antibacterial and antifungal activities. Involved in hygromycin B-induced transcriptional control of the cluster. This Fusarium sp protein is Myb-like transcription factor.